A 282-amino-acid polypeptide reads, in one-letter code: 2-dehydro-3-deoxyphosphooctonate aldolase (282 aa).

This sequence belongs to the KdsA family.

The protein resides in the cytoplasm. It catalyses the reaction D-arabinose 5-phosphate + phosphoenolpyruvate + H2O = 3-deoxy-alpha-D-manno-2-octulosonate-8-phosphate + phosphate. The protein operates within carbohydrate biosynthesis; 3-deoxy-D-manno-octulosonate biosynthesis; 3-deoxy-D-manno-octulosonate from D-ribulose 5-phosphate: step 2/3. It participates in bacterial outer membrane biogenesis; lipopolysaccharide biosynthesis. This is 2-dehydro-3-deoxyphosphooctonate aldolase from Shewanella sp. (strain MR-4).